A 191-amino-acid polypeptide reads, in one-letter code: Dephospho-CoA kinase (191 aa).

The DPCK domain occupies 3–191; sequence AIGITGSYAS…KLILVIARKL (189 aa). 11–16 serves as a coordination point for ATP; it reads ASGKTF.

The protein belongs to the CoaE family.

The protein resides in the cytoplasm. The catalysed reaction is 3'-dephospho-CoA + ATP = ADP + CoA + H(+). It participates in cofactor biosynthesis; coenzyme A biosynthesis; CoA from (R)-pantothenate: step 5/5. Functionally, catalyzes the phosphorylation of the 3'-hydroxyl group of dephosphocoenzyme A to form coenzyme A. The sequence is that of Dephospho-CoA kinase from Rickettsia felis (strain ATCC VR-1525 / URRWXCal2) (Rickettsia azadi).